A 746-amino-acid chain; its full sequence is EF-hand domain-containing family member C2 (746 aa).

3 DM10 domains span residues 75-182, 226-367, and 429-536; these read DKQV…RKMG, DGHV…RTKY, and ESNT…EKHA. An EF-hand domain is found at 557 to 592; the sequence is PRSREIRQVFAAADPQHTKVIEYDPFRNLIVSITDG.

It localises to the cytoplasm. The protein resides in the cytoskeleton. The protein localises to the cilium axoneme. Functionally, microtubule inner protein (MIP) part of the dynein-decorated doublet microtubules (DMTs) in cilia axoneme, which is required for motile cilia beating. The chain is EF-hand domain-containing family member C2 (EFHC2) from Gallus gallus (Chicken).